Here is a 361-residue protein sequence, read N- to C-terminus: Chorismate synthase (361 aa).

NADP(+) is bound by residues arginine 48 and arginine 54. FMN is bound by residues 125 to 127 (RSS), 238 to 239 (NA), glycine 278, 293 to 297 (KPTSS), and arginine 319.

It belongs to the chorismate synthase family. In terms of assembly, homotetramer. FMNH2 is required as a cofactor.

It catalyses the reaction 5-O-(1-carboxyvinyl)-3-phosphoshikimate = chorismate + phosphate. It participates in metabolic intermediate biosynthesis; chorismate biosynthesis; chorismate from D-erythrose 4-phosphate and phosphoenolpyruvate: step 7/7. In terms of biological role, catalyzes the anti-1,4-elimination of the C-3 phosphate and the C-6 proR hydrogen from 5-enolpyruvylshikimate-3-phosphate (EPSP) to yield chorismate, which is the branch point compound that serves as the starting substrate for the three terminal pathways of aromatic amino acid biosynthesis. This reaction introduces a second double bond into the aromatic ring system. The chain is Chorismate synthase from Methylobacillus flagellatus (strain ATCC 51484 / DSM 6875 / VKM B-1610 / KT).